We begin with the raw amino-acid sequence, 479 residues long: UDP-glycosyltransferase 84A3 (479 aa).

The Proton acceptor role is filled by H19. H19 contributes to the an anthocyanidin binding site. UDP-alpha-D-glucose-binding residues include Q346, H361, W364, N365, S366, and E369. An anthocyanidin is bound at residue G384. UDP-alpha-D-glucose is bound by residues D385 and Q386.

The protein belongs to the UDP-glycosyltransferase family.

The catalysed reaction is (E)-4-coumarate + UDP-alpha-D-glucose = 4-O-(beta-D-glucosyl)-trans-4-coumarate + UDP + H(+). It catalyses the reaction (E)-ferulate + UDP-alpha-D-glucose = 1-O-[(E)-feruloyl]-beta-D-glucose + UDP. It carries out the reaction (E)-caffeate + UDP-alpha-D-glucose = 1-O-[(E)-caffeoyl]-beta-D-glucose + UDP. The enzyme catalyses (E)-sinapate + UDP-alpha-D-glucose = 1-O-(trans-sinapoyl)-beta-D-glucose + UDP. The catalysed reaction is (E)-cinnamate + UDP-alpha-D-glucose = 1-O-(trans-cinnamoyl)-beta-D-glucose + UDP. Its function is as follows. UDP-glucosyltransferase that forms glucose esters with phenylpropanoids. Glucosylates 4-coumarate, ferulate, caffeate, sinapate and cinnamate. The chain is UDP-glycosyltransferase 84A3 from Arabidopsis thaliana (Mouse-ear cress).